A 369-amino-acid polypeptide reads, in one-letter code: MKSGRFIGVMSGTSLDGVDVVLATIDEHRVAQLASLSWPIPVSLKQAVLDICQGQQLTLSQFGQLDTQLGRLFADAVNALLKEQNLQARDIVAIGCHGQTVWHEPTGVAPHTLQIGDNNQIVARTGITVVGDFRRRDIALGGQGAPLVPAFHHALLAHPTERRMVLNIGGIANLSLLIPGQPVGGYDTGPGNMLMDAWIWRQAGKPYDKDAEWARAGKVILPLLQNMLSDPYFSQPAPKSTGREYFNYGWLERHLRHFPGVDPRDVQATLAELTAVTISEQVLLSGGCERLMVCGGGSRNPLLMARLAALLPGTEVTTTDAVGISGDDMEALAFAWLAWRTLAGLPGNLPSVTGASQETVLGAIFPANP.

12 to 19 (GTSLDGVD) is a binding site for ATP.

This sequence belongs to the anhydro-N-acetylmuramic acid kinase family.

The catalysed reaction is 1,6-anhydro-N-acetyl-beta-muramate + ATP + H2O = N-acetyl-D-muramate 6-phosphate + ADP + H(+). It functions in the pathway amino-sugar metabolism; 1,6-anhydro-N-acetylmuramate degradation. The protein operates within cell wall biogenesis; peptidoglycan recycling. In terms of biological role, catalyzes the specific phosphorylation of 1,6-anhydro-N-acetylmuramic acid (anhMurNAc) with the simultaneous cleavage of the 1,6-anhydro ring, generating MurNAc-6-P. Is required for the utilization of anhMurNAc either imported from the medium or derived from its own cell wall murein, and thus plays a role in cell wall recycling. In Shigella boydii serotype 18 (strain CDC 3083-94 / BS512), this protein is Anhydro-N-acetylmuramic acid kinase.